The following is a 28-amino-acid chain: Glutathione S-transferase 5 (28 aa).

The GST N-terminal domain maps to 1-28 (PNYKLTYFNLRGRAEISRYLFAYAGIKY). Residue Tyr-7 coordinates glutathione.

It belongs to the GST superfamily. Sigma family. In terms of assembly, homodimer.

Its subcellular location is the cytoplasm. It catalyses the reaction RX + glutathione = an S-substituted glutathione + a halide anion + H(+). Functionally, conjugation of reduced glutathione to a wide number of exogenous and endogenous hydrophobic electrophiles. The protein is Glutathione S-transferase 5 of Gallus gallus (Chicken).